Reading from the N-terminus, the 365-residue chain is Pheromone M-factor receptor (365 aa).

The next 7 helical transmembrane spans lie at F7–Y24, N31–I54, I73–I100, V116–L133, Y155–Y182, F204–V226, and V265–W283.

The protein belongs to the G-protein coupled receptor 4 family.

The protein resides in the membrane. Its function is as follows. Receptor for the peptide pheromone M-factor, a mating factor of S.pombe. Pheromone signaling is essential for initiation of meiosis in S.pombe; M-factor signaling alone may be sufficient. This Schizosaccharomyces pombe (strain 972 / ATCC 24843) (Fission yeast) protein is Pheromone M-factor receptor (map3).